Consider the following 629-residue polypeptide: tRNA uridine 5-carboxymethylaminomethyl modification enzyme MnmG (629 aa).

Gly-11–Gly-16 is a binding site for FAD. Gly-273–Phe-287 lines the NAD(+) pocket.

It belongs to the MnmG family. Homodimer. Heterotetramer of two MnmE and two MnmG subunits. Requires FAD as cofactor.

It is found in the cytoplasm. Its function is as follows. NAD-binding protein involved in the addition of a carboxymethylaminomethyl (cmnm) group at the wobble position (U34) of certain tRNAs, forming tRNA-cmnm(5)s(2)U34. This Mycoplasma mycoides subsp. mycoides SC (strain CCUG 32753 / NCTC 10114 / PG1) protein is tRNA uridine 5-carboxymethylaminomethyl modification enzyme MnmG.